The sequence spans 228 residues: Phosphoglycolate phosphatase (228 aa).

The Nucleophile role is filled by Asp-12. Positions 12, 14, and 177 each coordinate Mg(2+).

This sequence belongs to the HAD-like hydrolase superfamily. CbbY/CbbZ/Gph/YieH family. Requires Mg(2+) as cofactor.

The enzyme catalyses 2-phosphoglycolate + H2O = glycolate + phosphate. It participates in organic acid metabolism; glycolate biosynthesis; glycolate from 2-phosphoglycolate: step 1/1. Specifically catalyzes the dephosphorylation of 2-phosphoglycolate. Is involved in the dissimilation of the intracellular 2-phosphoglycolate formed during the DNA repair of 3'-phosphoglycolate ends, a major class of DNA lesions induced by oxidative stress. This is Phosphoglycolate phosphatase from Vibrio parahaemolyticus serotype O3:K6 (strain RIMD 2210633).